A 131-amino-acid chain; its full sequence is Peptidyl-prolyl cis-trans isomerase NIMA-interacting 4 (131 aa).

The necessary for nuclear localization and DNA-binding stretch occupies residues 1–25 (MPPKGKSGSGKGGKGKAASGSESSE). The segment at 1–37 (MPPKGKSGSGKGGKGKAASGSESSEKKAQGPKGGGNA) is disordered. The tract at residues 1–41 (MPPKGKSGSGKGGKGKAASGSESSEKKAQGPKGGGNAVKVR) is necessary for association with the pre-rRNP complexes. Ser-19 is subject to Phosphoserine; by CK2. The PpiC domain maps to 35–129 (GNAVKVRHIL…FGYHIIMVEG (95 aa)).

The protein belongs to the PpiC/parvulin rotamase family. PIN4 subfamily. As to quaternary structure, found in pre-ribosomal ribonucleoprotein (pre-rRNP) complexes. Phosphorylated. Phosphorylation occurs both in the nucleus and the cytoplasm. Phosphorylation at Ser-19 does not affect its PPIase activity but is required for nuclear localization, and the dephosphorylation is a prerequisite for the binding to DNA. The unphosphorylated form associates with the pre-rRNP complexes in the nucleus.

Its subcellular location is the nucleus. The protein localises to the nucleolus. The protein resides in the cytoplasm. It is found in the cytoskeleton. It localises to the spindle. It carries out the reaction [protein]-peptidylproline (omega=180) = [protein]-peptidylproline (omega=0). Its function is as follows. Involved as a ribosomal RNA processing factor in ribosome biogenesis. Binds to tightly bent AT-rich stretches of double-stranded DNA. The polypeptide is Peptidyl-prolyl cis-trans isomerase NIMA-interacting 4 (PIN4) (Bos taurus (Bovine)).